A 332-amino-acid polypeptide reads, in one-letter code: MENLEQLVQDGLNAVEKADNLQALDQIRVEYLGKKGVITQQAKTLGKLSAEERPAAGQKINEAKGQVEQAINARRADLEKAAIEARLAAESIDVTLPGRGQDLGGLHPVTRTLQRIEEIFARAGYSVEQGPEIEDDYHNFEALNIPGHHPARAMHDTFYFNPGTLLRTHTSPVQIRTMEAGKPPFRMICPGRVYRCDSDMTHTPMFHQVEGLLVEKNVSFADLKSTVEEFLRVFFERDLKVRFRPSYFPFTEPSAEVDIEWGREPDGSIKWLEVMGCGMVHPKVFEYCGIDSEEYRGFAFGLGVERLAMLRYGVKDLRMFFENDLRFLRQFR.

Glu252 is a binding site for Mg(2+).

Belongs to the class-II aminoacyl-tRNA synthetase family. Phe-tRNA synthetase alpha subunit type 1 subfamily. Tetramer of two alpha and two beta subunits. It depends on Mg(2+) as a cofactor.

Its subcellular location is the cytoplasm. It catalyses the reaction tRNA(Phe) + L-phenylalanine + ATP = L-phenylalanyl-tRNA(Phe) + AMP + diphosphate + H(+). The polypeptide is Phenylalanine--tRNA ligase alpha subunit (Marinobacter nauticus (strain ATCC 700491 / DSM 11845 / VT8) (Marinobacter aquaeolei)).